A 134-amino-acid chain; its full sequence is Arsenate reductase (134 aa).

Catalysis depends on nucleophile residues cysteine 11, cysteine 83, and cysteine 90. Intrachain disulfides connect cysteine 11-cysteine 83 and cysteine 83-cysteine 90.

The protein belongs to the low molecular weight phosphotyrosine protein phosphatase family. Thioredoxin-coupled ArsC subfamily.

It localises to the cytoplasm. The catalysed reaction is arsenate + [thioredoxin]-dithiol + H(+) = arsenite + [thioredoxin]-disulfide + H2O. Catalyzes the reduction of arsenate [As(V)] to arsenite [As(III)]. This Bacillus cereus (strain AH187) protein is Arsenate reductase.